Reading from the N-terminus, the 421-residue chain is Gamma-glutamyl phosphate reductase (421 aa).

It belongs to the gamma-glutamyl phosphate reductase family.

Its subcellular location is the cytoplasm. The enzyme catalyses L-glutamate 5-semialdehyde + phosphate + NADP(+) = L-glutamyl 5-phosphate + NADPH + H(+). Its pathway is amino-acid biosynthesis; L-proline biosynthesis; L-glutamate 5-semialdehyde from L-glutamate: step 2/2. In terms of biological role, catalyzes the NADPH-dependent reduction of L-glutamate 5-phosphate into L-glutamate 5-semialdehyde and phosphate. The product spontaneously undergoes cyclization to form 1-pyrroline-5-carboxylate. The polypeptide is Gamma-glutamyl phosphate reductase (Acinetobacter baumannii (strain ATCC 17978 / DSM 105126 / CIP 53.77 / LMG 1025 / NCDC KC755 / 5377)).